Consider the following 321-residue polypeptide: NADPH-dependent codeinone reductase 1-5 (321 aa).

NADPH-binding residues include T27 and D51. Active-site proton donor residues include Y56 and H119. Position 119 (H119) interacts with substrate. Q187, S214, L216, S264, and R269 together coordinate NADPH.

The protein belongs to the aldo/keto reductase family. As to expression, latex secreting cells (laticifer cells). Expressed constitutively and ubiquitously with highest levels in capsules.

Its subcellular location is the cytoplasm. The protein localises to the cytosol. The catalysed reaction is codeine + NADP(+) = codeinone + NADPH + H(+). It carries out the reaction neopine + NADP(+) = neopinone + NADPH + H(+). The enzyme catalyses morphine + NADP(+) = morphinone + NADPH + H(+). It catalyses the reaction neomorphine + NADP(+) = neomorphinone + NADPH + H(+). It functions in the pathway alkaloid biosynthesis; morphine biosynthesis. Functionally, NADPH-dependent codeinone reductase involved in biosynthesis of morphinan-type benzylisoquinoline and opiate alkaloids natural products. Reduces codeinone to codeine in the penultimate step in morphine biosynthesis. Can use morphinone, hydrocodone and hydromorphone as substrate during reductive reaction with NADPH as cofactor, and morphine and dihydrocodeine as substrate during oxidative reaction with NADP as cofactor. Converts morphinone to morphine, and neomorphinone to neomorphine. Reduces irreversibly neopinone, a spontaneous isomer of codeinone, to neopine; in planta, neopine levels are limited to low levels. This chain is NADPH-dependent codeinone reductase 1-5, found in Papaver somniferum (Opium poppy).